The chain runs to 360 residues: GTP 3',8-cyclase (360 aa).

The segment at Met-1–Leu-31 is disordered. In terms of domain architecture, Radical SAM core spans Arg-33–Asp-251. Arg-42 provides a ligand contact to GTP. Cys-49 and Cys-53 together coordinate [4Fe-4S] cluster. Tyr-55 provides a ligand contact to S-adenosyl-L-methionine. Cys-56 lines the [4Fe-4S] cluster pocket. Residue Arg-93 coordinates GTP. Gly-97 provides a ligand contact to S-adenosyl-L-methionine. Thr-124 contacts GTP. Ser-148 contributes to the S-adenosyl-L-methionine binding site. Position 185 (Lys-185) interacts with GTP. Met-219 lines the S-adenosyl-L-methionine pocket. Residues Cys-287 and Cys-290 each contribute to the [4Fe-4S] cluster site. Arg-292–Arg-294 serves as a coordination point for GTP. Residue Cys-304 participates in [4Fe-4S] cluster binding.

The protein belongs to the radical SAM superfamily. MoaA family. As to quaternary structure, monomer and homodimer. It depends on [4Fe-4S] cluster as a cofactor.

It carries out the reaction GTP + AH2 + S-adenosyl-L-methionine = (8S)-3',8-cyclo-7,8-dihydroguanosine 5'-triphosphate + 5'-deoxyadenosine + L-methionine + A + H(+). Its pathway is cofactor biosynthesis; molybdopterin biosynthesis. Functionally, catalyzes the cyclization of GTP to (8S)-3',8-cyclo-7,8-dihydroguanosine 5'-triphosphate. This Mycobacterium ulcerans (strain Agy99) protein is GTP 3',8-cyclase.